A 423-amino-acid polypeptide reads, in one-letter code: Putative competence-damage inducible protein (423 aa).

This sequence belongs to the CinA family.

This is Putative competence-damage inducible protein from Streptococcus pyogenes serotype M12 (strain MGAS2096).